Reading from the N-terminus, the 134-residue chain is MIGRLNHVAIAVPDLEAAAAQYRNTLGAEVGAPQDEPDHGVTVIFITLPNTKIELLHPLGEGSPIAGFLEKNPAGGIHHICYEVEDILAARDRLKEAGARVLGSGEPKIGAHGKPVLFLHPKDFNGCLVELEQV.

A VOC domain is found at R4–V134. H7, H79, and E130 together coordinate Co(2+). The Proton donor/acceptor role is filled by E130.

The protein belongs to the methylmalonyl-CoA epimerase family. Co(2+) serves as cofactor. Requires Mn(2+) as cofactor.

The enzyme catalyses (2R)-ethylmalonyl-CoA = (2S)-ethylmalonyl-CoA. It carries out the reaction (R)-methylmalonyl-CoA = (S)-methylmalonyl-CoA. Promiscuous isomerase that catalyzes epimerization of both ethylmalonyl-CoA and methylmalonyl-CoA. Has thus a dual role in the ethylmalonyl-CoA pathway for acetyl-CoA assimilation required for R.sphaeroides growth on acetate as sole carbon source. This Cereibacter sphaeroides (strain ATCC 17023 / DSM 158 / JCM 6121 / CCUG 31486 / LMG 2827 / NBRC 12203 / NCIMB 8253 / ATH 2.4.1.) (Rhodobacter sphaeroides) protein is Ethylmalonyl-CoA/methylmalonyl-CoA epimerase.